Reading from the N-terminus, the 141-residue chain is uncharacterized protein (141 aa).

Residues 24-52 (KVQTALQKEAKTIKREQKKIKDEIDTFKT) are a coiled coil.

This is an uncharacterized protein from Invertebrate iridescent virus 6 (IIV-6).